Here is a 362-residue protein sequence, read N- to C-terminus: 3-isopropylmalate dehydrogenase (362 aa).

77–88 (GPKWGTGAVRPE) provides a ligand contact to NAD(+). Residues Arg-95, Arg-105, Arg-134, and Asp-223 each coordinate substrate. Mg(2+)-binding residues include Asp-223, Asp-248, and Asp-252. NAD(+) is bound at residue 287–298 (GSAPDLPPNKVN).

This sequence belongs to the isocitrate and isopropylmalate dehydrogenases family. Homodimer. It depends on Mg(2+) as a cofactor. Requires Mn(2+) as cofactor.

It is found in the cytoplasm. It carries out the reaction (2R,3S)-3-isopropylmalate + NAD(+) = 4-methyl-2-oxopentanoate + CO2 + NADH. The protein operates within amino-acid biosynthesis; L-leucine biosynthesis; L-leucine from 3-methyl-2-oxobutanoate: step 3/4. Its function is as follows. Catalyzes the oxidation of 3-carboxy-2-hydroxy-4-methylpentanoate (3-isopropylmalate) to 3-carboxy-4-methyl-2-oxopentanoate. The product decarboxylates to 4-methyl-2 oxopentanoate. This Blastobotrys adeninivorans (Yeast) protein is 3-isopropylmalate dehydrogenase (LEU2).